A 203-amino-acid chain; its full sequence is Ribosomal RNA small subunit methyltransferase G (203 aa).

S-adenosyl-L-methionine contacts are provided by residues G73, L78, 124 to 125 (VE), and R138.

The protein belongs to the methyltransferase superfamily. RNA methyltransferase RsmG family.

It localises to the cytoplasm. It carries out the reaction guanosine(527) in 16S rRNA + S-adenosyl-L-methionine = N(7)-methylguanosine(527) in 16S rRNA + S-adenosyl-L-homocysteine. Its function is as follows. Specifically methylates the N7 position of guanine in position 527 of 16S rRNA. The chain is Ribosomal RNA small subunit methyltransferase G from Glaesserella parasuis serovar 5 (strain SH0165) (Haemophilus parasuis).